Here is a 208-residue protein sequence, read N- to C-terminus: EF-hand protein 5 variant 1 (208 aa).

The tract at residues 1 to 34 is disordered; the sequence is MQARGTVKVQGDAKVDGKMSTGQHSHHQHLNSTQ. EF-hand domains follow at residues 64-98, 99-134, 135-170, and 171-206; these read MAEG…HLTE, EEFH…EVDD, TMAD…LGER, and STPE…SRVN. 5 residues coordinate Ca(2+): Glu-118, Asp-123, Asp-148, Thr-152, and Tyr-154.

The polypeptide is EF-hand protein 5 variant 1 (Trypanosoma cruzi).